We begin with the raw amino-acid sequence, 89 residues long: Small ribosomal subunit protein uS14 (89 aa).

The protein belongs to the universal ribosomal protein uS14 family. As to quaternary structure, part of the 30S ribosomal subunit. Contacts proteins S3 and S10.

Binds 16S rRNA, required for the assembly of 30S particles and may also be responsible for determining the conformation of the 16S rRNA at the A site. The chain is Small ribosomal subunit protein uS14 from Akkermansia muciniphila (strain ATCC BAA-835 / DSM 22959 / JCM 33894 / BCRC 81048 / CCUG 64013 / CIP 107961 / Muc).